A 1562-amino-acid chain; its full sequence is Phospholipid-transporting ATPase dnf1 (1562 aa).

4 disordered regions span residues 1-38, 55-94, 115-134, and 146-166; these read MKSS…ADDG, LPLG…SDSR, TPST…KKAH, and PLDD…NGRP. Over 1–275 the chain is Extracellular; sequence MKSSGIAGDS…IAIMQMIPGW (275 aa). A compositionally biased stretch (polar residues) spans 12–21; it reads GFETNFLNET. The span at 60-69 shows a compositional bias: acidic residues; sequence DENELDEIDI. Positions 71–86 are enriched in basic and acidic residues; the sequence is GDSKKLDSVEVDESHD. The chain crosses the membrane as a helical span at residues 276 to 296; it reads STTGTYTTIIPLLIFISIAIL. The Cytoplasmic segment spans residues 297–574; that stretch reads REGFDNYRRY…APSMQKVTNR (278 aa). The interval 347 to 406 is disordered; it reads SQESASRSTIRSTDEREPERTSEDPPQLPPSPSSPSSPALSVKPNIDPQPPLYNSTLTTT. A compositionally biased stretch (basic and acidic residues) spans 358–369; the sequence is STDEREPERTSE. Positions 372–381 are enriched in pro residues; sequence PQLPPSPSSP. The helical transmembrane segment at 575-595 threads the bilayer; sequence IVIFIFALVVSMAIYCTAAYF. Over 596–614 the chain is Extracellular; the sequence is VWQKKVERKLWYLTNSKLS. The chain crosses the membrane as a helical span at residues 615–635; it reads FVPILVSFIILYNTMVPISLY. Over 636–1309 the chain is Cytoplasmic; it reads VSMEIIRVFQ…YILGTFYKEQ (674 aa). Aspartate 684 functions as the 4-aspartylphosphate intermediate in the catalytic mechanism. 8 residues coordinate ATP: aspartate 684, lysine 685, threonine 686, glutamate 794, phenylalanine 843, serine 845, lysine 848, and lysine 866. Residue aspartate 684 coordinates Mg(2+). Threonine 686 contributes to the Mg(2+) binding site. A Phosphoserine modification is found at serine 954. Residues arginine 1022, threonine 1023, threonine 1102, glycine 1103, aspartate 1104, 1181 to 1188, arginine 1216, and lysine 1222 each bind ATP; that span reads VIVIDGST. Residue aspartate 1243 coordinates Mg(2+). Asparagine 1246 and aspartate 1247 together coordinate ATP. Residues 1310–1330 traverse the membrane as a helical segment; that stretch reads FFFLMQAIMQPFVGYTGQSLY. Residues 1331–1332 lie on the Extracellular side of the membrane; sequence ES. Residues 1333–1353 traverse the membrane as a helical segment; the sequence is WGLTCFNTLFSSLCVIGLGIF. Residues 1354 to 1381 are Cytoplasmic-facing; sequence EKDLSASTVIAVPELYQKGINNEAFNWR. Residues 1382 to 1402 form a helical membrane-spanning segment; it reads VYFGWCSIAFIQAFLVFYVTY. At 1403–1414 the chain is on the extracellular side; sequence SLFGMKELNDNN. A helical membrane pass occupies residues 1415 to 1435; it reads IFAYGQLIFTAAIFIMNFKLV. Topologically, residues 1436-1443 are cytoplasmic; the sequence is FIEMQYIN. A helical transmembrane segment spans residues 1444–1464; that stretch reads IISIIVLVLTSLAWFLFNIFI. Residues 1465 to 1490 are Extracellular-facing; sequence SEHYPDKNLYLARSQFLHHFGKNPSW. Residues 1491 to 1511 traverse the membrane as a helical segment; it reads WLTMLFVMVCALTIDIVAQML. The Cytoplasmic portion of the chain corresponds to 1512–1562; the sequence is RRTLRPTDTDIFVEMENDAFVRSRFEQESGEFLQANAPSVDEIEQYLKSRD.

Belongs to the cation transport ATPase (P-type) (TC 3.A.3) family. Type IV subfamily. Mg(2+) serves as cofactor.

It localises to the golgi apparatus. The protein resides in the trans-Golgi network membrane. The protein localises to the endosome membrane. It carries out the reaction ATP + H2O + phospholipidSide 1 = ADP + phosphate + phospholipidSide 2.. The catalysed reaction is a 1,2-diacyl-sn-glycero-3-phosphocholine(out) + ATP + H2O = a 1,2-diacyl-sn-glycero-3-phosphocholine(in) + ADP + phosphate + H(+). The enzyme catalyses a 1,2-diacyl-sn-glycero-3-phosphoethanolamine(out) + ATP + H2O = a 1,2-diacyl-sn-glycero-3-phosphoethanolamine(in) + ADP + phosphate + H(+). Catalytic component of a P4-ATPase flippase complex which catalyzes the hydrolysis of ATP coupled to the transport of phosphatidylcholine and small amounts of phosphatidylethanolamine from the lumen to the cytosolic leaflet of the trans-Golgi network and ensures the maintenance of asymmetric distribution of phospholipids. May be involved in transport from early endosomes to the trans-Golgi network (TGN). The polypeptide is Phospholipid-transporting ATPase dnf1 (Schizosaccharomyces pombe (strain 972 / ATCC 24843) (Fission yeast)).